Reading from the N-terminus, the 207-residue chain is Guanylate kinase (207 aa).

The region spanning 5–184 (GNLFIVSAPS…ALADLSAIIR (180 aa)) is the Guanylate kinase-like domain. Residue 12-19 (APSGAGKS) participates in ATP binding. Residues 30–49 (PSDKQVSVSHTTRKPRPGEV) are disordered.

Belongs to the guanylate kinase family.

It localises to the cytoplasm. It carries out the reaction GMP + ATP = GDP + ADP. Essential for recycling GMP and indirectly, cGMP. In Shewanella frigidimarina (strain NCIMB 400), this protein is Guanylate kinase.